The sequence spans 370 residues: tRNA-specific 2-thiouridylase MnmA (370 aa).

Residues 6–13 (AMSGGVDS) and leucine 32 contribute to the ATP site. Cysteine 101 acts as the Nucleophile in catalysis. Cysteines 101 and 193 form a disulfide. Glycine 125 is an ATP binding site. Positions 143–145 (KDQ) are interaction with tRNA. Catalysis depends on cysteine 193, which acts as the Cysteine persulfide intermediate.

This sequence belongs to the MnmA/TRMU family.

It localises to the cytoplasm. It catalyses the reaction S-sulfanyl-L-cysteinyl-[protein] + uridine(34) in tRNA + AH2 + ATP = 2-thiouridine(34) in tRNA + L-cysteinyl-[protein] + A + AMP + diphosphate + H(+). Catalyzes the 2-thiolation of uridine at the wobble position (U34) of tRNA, leading to the formation of s(2)U34. This Rhodococcus erythropolis (strain PR4 / NBRC 100887) protein is tRNA-specific 2-thiouridylase MnmA.